Consider the following 309-residue polypeptide: NAD kinase (309 aa).

D89 serves as the catalytic Proton acceptor. NAD(+) contacts are provided by residues 89–90, 163–164, H174, R191, D193, and 204–209; these read DG, NE, and TAYALS.

The protein belongs to the NAD kinase family. A divalent metal cation serves as cofactor.

Its subcellular location is the cytoplasm. The enzyme catalyses NAD(+) + ATP = ADP + NADP(+) + H(+). Its function is as follows. Involved in the regulation of the intracellular balance of NAD and NADP, and is a key enzyme in the biosynthesis of NADP. Catalyzes specifically the phosphorylation on 2'-hydroxyl of the adenosine moiety of NAD to yield NADP. The chain is NAD kinase from Shewanella sp. (strain MR-4).